A 428-amino-acid chain; its full sequence is Phosphomethylpyrimidine synthase (428 aa).

Substrate is bound by residues Asn-66, Met-94, Tyr-123, His-162, 184-186 (SRG), 225-228 (DALR), and Glu-264. His-268 contributes to the Zn(2+) binding site. Tyr-291 contacts substrate. His-332 serves as a coordination point for Zn(2+). 3 residues coordinate [4Fe-4S] cluster: Cys-408, Cys-411, and Cys-415.

Belongs to the ThiC family. [4Fe-4S] cluster is required as a cofactor.

The catalysed reaction is 5-amino-1-(5-phospho-beta-D-ribosyl)imidazole + S-adenosyl-L-methionine = 4-amino-2-methyl-5-(phosphooxymethyl)pyrimidine + CO + 5'-deoxyadenosine + formate + L-methionine + 3 H(+). The protein operates within cofactor biosynthesis; thiamine diphosphate biosynthesis. Catalyzes the synthesis of the hydroxymethylpyrimidine phosphate (HMP-P) moiety of thiamine from aminoimidazole ribotide (AIR) in a radical S-adenosyl-L-methionine (SAM)-dependent reaction. This chain is Phosphomethylpyrimidine synthase, found in Sulfolobus acidocaldarius (strain ATCC 33909 / DSM 639 / JCM 8929 / NBRC 15157 / NCIMB 11770).